The chain runs to 211 residues: UPF0637 protein ABC2405 (211 aa).

This sequence belongs to the UPF0637 family.

In Shouchella clausii (strain KSM-K16) (Alkalihalobacillus clausii), this protein is UPF0637 protein ABC2405.